We begin with the raw amino-acid sequence, 473 residues long: MSNIYIQEPPTNGKVLLKTTAGDIDIELWSKEAPKACRNFIQLCLEAYYDNTIFHRVVPGFIVQGGDPTGTGTGGESIYGVPFKDEFHSRLRFNRRGLVAMANAGPHDNGSQFFFTLGRADELNNKHTIFGKVTGDTVYNMLRLTEVDIDDEERPRNSHKIRSCEVLFNPFDDIIPREIKKPKKEKPEEEVKKLKPKGTKNFSLLSFGEEAEEEEEEVNRVSQSMKGKSKSSHDLLKDDPHLSSVPAVESERGDAAEDSDDDGEYEGAEHDEYVDGDEKNQMRERIAKKLKKDTSENVKRAGEGEVEKKPVSRSEELRKEARQLKRELLAAKQKKAENSAIQAEKRSEEEEAAPDGAVAEYRREKQKYEALRKQQAKTGTSREDQTLALLNQFKSKLTQAIAETPENDISETEVEDDEGWMSHVLQFEDKSRKVKDASMQDSDTFEIYDPRNPVNKRRREESKKLMREKKERR.

Position 2 is an N-acetylserine (Ser-2). The 156-residue stretch at 11 to 166 folds into the PPIase cyclophilin-type domain; it reads TNGKVLLKTT…NSHKIRSCEV (156 aa). Residues 178-193 are compositionally biased toward basic and acidic residues; it reads EIKKPKKEKPEEEVKK. Disordered stretches follow at residues 178 to 197, 203 to 383, and 401 to 473; these read EIKK…LKPK, SLLS…TSRE, and IAET…KERR. The stretch at 206-230 forms a coiled coil; it reads SFGEEAEEEEEEVNRVSQSMKGKSK. Residues 231-241 show a composition bias toward basic and acidic residues; it reads SSHDLLKDDPH. A Cell attachment site motif is present at residues 252 to 254; it reads RGD. The segment covering 256 to 266 has biased composition (acidic residues); it reads AEDSDDDGEYE. 2 stretches are compositionally biased toward basic and acidic residues: residues 267–348 and 360–372; these read GAEH…KRSE and EYRR…EALR. Residues 311–378 are a coiled coil; that stretch reads VSRSEELRKE…EALRKQQAKT (68 aa). A Phosphoserine modification is found at Ser-347. Over residues 405–419 the composition is skewed to acidic residues; that stretch reads PENDISETEVEDDEG. Composition is skewed to basic and acidic residues over residues 426–438 and 458–473; these read QFED…KDAS and RREE…KERR.

Belongs to the cyclophilin-type PPIase family. Part of the activated spliceosome B/catalytic step 1 spliceosome, one of the forms of the spliceosome which has a well-formed active site but still cannot catalyze the branching reaction and is composed at least of 52 proteins, the U2, U5 and U6 snRNAs and the pre-mRNA. Recruited during early steps of activated spliceosome B maturation, it is probably one of the first proteins released from this complex as he matures to the spliceosome C complex. Component of the minor spliceosome, which splices U12-type introns.

Its subcellular location is the nucleus. In terms of biological role, as part of the spliceosome, plays a role in pre-mRNA splicing. Probable inactive PPIase with no peptidyl-prolyl cis-trans isomerase activity. As a component of the minor spliceosome, involved in the splicing of U12-type introns in pre-mRNAs. This chain is Spliceosome-associated protein CWC27 homolog, found in Bos taurus (Bovine).